The chain runs to 144 residues: Superoxide dismutase [Mn], mitochondrial (144 aa).

Residues His10, His58, and Asp143 each coordinate Mn(2+).

It belongs to the iron/manganese superoxide dismutase family. In terms of assembly, homotetramer. Mn(2+) serves as cofactor.

Its subcellular location is the mitochondrion matrix. The enzyme catalyses 2 superoxide + 2 H(+) = H2O2 + O2. Its function is as follows. Destroys superoxide anion radicals which are normally produced within the cells and which are toxic to biological systems. The polypeptide is Superoxide dismutase [Mn], mitochondrial (Apostichopus californicus (California sea cucumber)).